A 103-amino-acid polypeptide reads, in one-letter code: Histone H4.2 (103 aa).

The span at 1-14 (MTGRGKGGKGLGKG) shows a compositional bias: gly residues. A disordered region spans residues 1-20 (MTGRGKGGKGLGKGGAKRHR). Lys6 carries the post-translational modification N6-acetyl-N6-methyllysine; alternate. 3 positions are modified to N6-methyllysine; alternate: Lys6, Lys9, and Lys13. Lys13 carries the N6-acetyl-N6-methyllysine; alternate modification. Residues 17–21 (KRHRK) mediate DNA binding. N6-glutaryllysine is present on Lys92.

It belongs to the histone H4 family. As to quaternary structure, the nucleosome is a histone octamer containing two molecules each of H2A, H2B, H3 and H4 assembled in one H3-H4 heterotetramer and two H2A-H2B heterodimers. The octamer wraps approximately 147 bp of DNA. Glutarylation at Lys-92 (H4K91glu) destabilizes nucleosomes by promoting dissociation of the H2A-H2B dimers from nucleosomes.

It localises to the nucleus. Its subcellular location is the chromosome. Its function is as follows. Core component of nucleosome. Nucleosomes wrap and compact DNA into chromatin, limiting DNA accessibility to the cellular machineries which require DNA as a template. Histones thereby play a central role in transcription regulation, DNA repair, DNA replication and chromosomal stability. DNA accessibility is regulated via a complex set of post-translational modifications of histones, also called histone code, and nucleosome remodeling. This is Histone H4.2 (H4.2) from Talaromyces funiculosus (Fruitlet core rot fungus).